A 50-amino-acid polypeptide reads, in one-letter code: Large ribosomal subunit protein bL32c (50 aa).

This sequence belongs to the bacterial ribosomal protein bL32 family.

Its subcellular location is the plastid. The sequence is that of Large ribosomal subunit protein bL32c (rpl32) from Euglena longa (Euglenophycean alga).